We begin with the raw amino-acid sequence, 139 residues long: Putative pre-16S rRNA nuclease (139 aa).

The protein belongs to the YqgF nuclease family.

The protein localises to the cytoplasm. Its function is as follows. Could be a nuclease involved in processing of the 5'-end of pre-16S rRNA. The protein is Putative pre-16S rRNA nuclease of Streptococcus equi subsp. zooepidemicus (strain H70).